The sequence spans 89 residues: Small ribosomal subunit protein bS20 (89 aa).

The tract at residues 1 to 28 is disordered; it reads MTLANIKSAKKRAIQSEKRRQHNASQRS.

The protein belongs to the bacterial ribosomal protein bS20 family.

In terms of biological role, binds directly to 16S ribosomal RNA. The polypeptide is Small ribosomal subunit protein bS20 (Pasteurella multocida (strain Pm70)).